The primary structure comprises 977 residues: Ephrin type-A receptor 1 (977 aa).

Positions 1-26 are cleaved as a signal peptide; sequence MERRWPLGLALLLLLLCAPLPPGARA. At 27 to 548 the chain is on the extracellular side; that stretch reads EEVTLMDTST…PVSRSLTGGE (522 aa). The 183-residue stretch at 28–210 folds into the Eph LBD domain; it reads EVTLMDTSTA…FYQRCAETVH (183 aa). 2 Fibronectin type-III domains span residues 333 to 446 and 448 to 539; these read PPSA…MGHA and SLSG…TSPP. Residues Asn415 and Asn479 are each glycosylated (N-linked (GlcNAc...) asparagine). A helical membrane pass occupies residues 549–569; sequence IVAVIFGLLLGIALLIGIYVF. At 570 to 977 the chain is on the cytoplasmic side; sequence RSRRGQRQRQ…ILCSIQGFKD (408 aa). Tyr600 and Tyr606 each carry phosphotyrosine; by autocatalysis. In terms of domain architecture, Protein kinase spans 625–885; it reads LIVDTVIGEG…QLQAHLEQLL (261 aa). Residues 631 to 639 and Lys657 each bind ATP; that span reads IGEGEFGEV. Asp750 (proton acceptor) is an active-site residue. Residue Tyr782 is modified to Phosphotyrosine; by autocatalysis. Phosphoserine occurs at positions 907 and 911. In terms of domain architecture, SAM spans 914 to 977; it reads IPYRSVSEWL…ILCSIQGFKD (64 aa). Positions 975 to 977 match the PDZ-binding motif; sequence FKD.

It belongs to the protein kinase superfamily. Tyr protein kinase family. Ephrin receptor subfamily. In terms of assembly, homodimer. Forms a signaling complex with LCK; PTK2B/PYK2 and PI3-kinase upon activation by EFNA1; regulates T-lymphocytes migration. Interacts (via SAM domain) with ILK (via ANK repeats); stimulated by EFNA1 but independent of the kinase activity of EPHA1. Interacts (kinase activity-dependent) with PTK2/FAK1. In terms of processing, phosphorylated. Autophosphorylation is stimulated by its ligand EFNA1. Post-translationally, ubiquitinated. As to expression, preferentially expressed in epithelial cells including skin, kidney, liver and thymus. Expressed in myogenic progenitor cells.

It is found in the cell membrane. It carries out the reaction L-tyrosyl-[protein] + ATP = O-phospho-L-tyrosyl-[protein] + ADP + H(+). Its function is as follows. Receptor tyrosine kinase which binds promiscuously membrane-bound ephrin-A family ligands residing on adjacent cells, leading to contact-dependent bidirectional signaling into neighboring cells. The signaling pathway downstream of the receptor is referred to as forward signaling while the signaling pathway downstream of the ephrin ligand is referred to as reverse signaling. Binds with a low affinity EFNA3 and EFNA4 and with a high affinity to EFNA1 which most probably constitutes its cognate/functional ligand. Upon activation by EFNA1 induces cell attachment to the extracellular matrix inhibiting cell spreading and motility through regulation of ILK and downstream RHOA and RAC. Also plays a role in angiogenesis and regulates cell proliferation. May play a role in apoptosis. This chain is Ephrin type-A receptor 1 (Epha1), found in Mus musculus (Mouse).